A 470-amino-acid polypeptide reads, in one-letter code: tRNA (guanine(37)-N(1))-methyltransferase (470 aa).

Residues 304–305, 332–333, and N370 contribute to the S-adenosyl-L-methionine site; these read DL and DG.

Belongs to the class I-like SAM-binding methyltransferase superfamily. TRM5/TYW2 family. In terms of assembly, monomer.

Its subcellular location is the mitochondrion matrix. The protein resides in the nucleus. The protein localises to the cytoplasm. The catalysed reaction is guanosine(37) in tRNA + S-adenosyl-L-methionine = N(1)-methylguanosine(37) in tRNA + S-adenosyl-L-homocysteine + H(+). Specifically methylates the N1 position of guanosine-37 in various cytoplasmic and mitochondrial tRNAs. Methylation is not dependent on the nature of the nucleoside 5' of the target nucleoside. This is the first step in the biosynthesis of wybutosine (yW), a modified base adjacent to the anticodon of tRNAs and required for accurate decoding. The polypeptide is tRNA (guanine(37)-N(1))-methyltransferase (Theileria parva (East coast fever infection agent)).